We begin with the raw amino-acid sequence, 443 residues long: UDP-N-acetylmuramate--L-alanine ligase (443 aa).

Position 110 to 116 (110 to 116 (GAHGKTS)) interacts with ATP.

The protein belongs to the MurCDEF family.

Its subcellular location is the cytoplasm. The catalysed reaction is UDP-N-acetyl-alpha-D-muramate + L-alanine + ATP = UDP-N-acetyl-alpha-D-muramoyl-L-alanine + ADP + phosphate + H(+). It functions in the pathway cell wall biogenesis; peptidoglycan biosynthesis. Functionally, cell wall formation. The polypeptide is UDP-N-acetylmuramate--L-alanine ligase (Streptococcus agalactiae serotype V (strain ATCC BAA-611 / 2603 V/R)).